Here is a 160-residue protein sequence, read N- to C-terminus: UPF0178 protein XC_1827 (160 aa).

It belongs to the UPF0178 family.

The polypeptide is UPF0178 protein XC_1827 (Xanthomonas campestris pv. campestris (strain 8004)).